Reading from the N-terminus, the 807-residue chain is Protein FAR1-RELATED SEQUENCE 2 (807 aa).

One can recognise an FAR1 domain in the interval 52-138; it reads YFYREYARSV…VKEHNHEICP (87 aa). An MULE domain is found at 219-315; the sequence is VVLFDTFYVR…CLWSVLSKIS (97 aa). An SWIM-type zinc finger spans residues 499-535; that stretch reads FFVALNNELLDACCSCHLFEYQGFLCKHAILVLQSAD. A coiled-coil region spans residues 660–680; it reads EDATNRSEELRQETEQVSSRA. Residues 788–798 are compositionally biased toward polar residues; that stretch reads GSSQFQGSDSS. A disordered region spans residues 788–807; that stretch reads GSSQFQGSDSSHPSDHRLSN.

Belongs to the FHY3/FAR1 family. Expressed in hypocotyls, rosette and cauline leaves, inflorescences stems, flowers and siliques.

It localises to the nucleus. In terms of biological role, putative transcription activator involved in regulating light control of development. The chain is Protein FAR1-RELATED SEQUENCE 2 (FRS2) from Arabidopsis thaliana (Mouse-ear cress).